The following is a 455-amino-acid chain: Bifunctional protein GlmU (455 aa).

The segment at methionine 1–arginine 227 is pyrophosphorylase. Residues leucine 8–glycine 11, lysine 22, glutamine 73, glycine 78–threonine 79, tyrosine 100–aspartate 102, glycine 137, glutamate 152, asparagine 167, and asparagine 225 each bind UDP-N-acetyl-alpha-D-glucosamine. Mg(2+) is bound at residue aspartate 102. Asparagine 225 serves as a coordination point for Mg(2+). The segment at tryptophan 228 to alanine 248 is linker. The interval glycine 249–glutamate 455 is N-acetyltransferase. UDP-N-acetyl-alpha-D-glucosamine contacts are provided by arginine 332 and lysine 350. The Proton acceptor role is filled by histidine 362. UDP-N-acetyl-alpha-D-glucosamine contacts are provided by tyrosine 365 and asparagine 376. Acetyl-CoA-binding positions include alanine 379, asparagine 385–tyrosine 386, serine 404, alanine 422, and arginine 439.

In the N-terminal section; belongs to the N-acetylglucosamine-1-phosphate uridyltransferase family. It in the C-terminal section; belongs to the transferase hexapeptide repeat family. As to quaternary structure, homotrimer. The cofactor is Mg(2+).

It localises to the cytoplasm. It catalyses the reaction alpha-D-glucosamine 1-phosphate + acetyl-CoA = N-acetyl-alpha-D-glucosamine 1-phosphate + CoA + H(+). It carries out the reaction N-acetyl-alpha-D-glucosamine 1-phosphate + UTP + H(+) = UDP-N-acetyl-alpha-D-glucosamine + diphosphate. The protein operates within nucleotide-sugar biosynthesis; UDP-N-acetyl-alpha-D-glucosamine biosynthesis; N-acetyl-alpha-D-glucosamine 1-phosphate from alpha-D-glucosamine 6-phosphate (route II): step 2/2. It participates in nucleotide-sugar biosynthesis; UDP-N-acetyl-alpha-D-glucosamine biosynthesis; UDP-N-acetyl-alpha-D-glucosamine from N-acetyl-alpha-D-glucosamine 1-phosphate: step 1/1. It functions in the pathway bacterial outer membrane biogenesis; LPS lipid A biosynthesis. In terms of biological role, catalyzes the last two sequential reactions in the de novo biosynthetic pathway for UDP-N-acetylglucosamine (UDP-GlcNAc). The C-terminal domain catalyzes the transfer of acetyl group from acetyl coenzyme A to glucosamine-1-phosphate (GlcN-1-P) to produce N-acetylglucosamine-1-phosphate (GlcNAc-1-P), which is converted into UDP-GlcNAc by the transfer of uridine 5-monophosphate (from uridine 5-triphosphate), a reaction catalyzed by the N-terminal domain. The chain is Bifunctional protein GlmU from Coxiella burnetii (strain Dugway 5J108-111).